A 279-amino-acid polypeptide reads, in one-letter code: Coiled-coil domain-containing protein 117 (279 aa).

Positions 1 to 82 are disordered; sequence MAALGRPFSG…REEEEDDDCP (82 aa). Residue R48 is modified to Omega-N-methylarginine. S53 carries the post-translational modification Phosphoserine. Residues 63–72 are compositionally biased toward basic residues; that stretch reads VSVHCKKKHK. A coiled-coil region spans residues 141–168; it reads QCEVARRKLQEIEDRIIDEDEEVEADRN. Positions 217-279 are disordered; sequence LLSDKPKPSS…ATSTEEEMEL (63 aa). Composition is skewed to polar residues over residues 224–235 and 262–272; these read PSSNTKNYTGES and SLYNSLETATS.

In terms of assembly, interacts with CIAO2B; the interaction is direct. Interacts with MMS19; the interaction is indirect.

Its subcellular location is the cytoplasm. The protein localises to the cytoskeleton. The protein resides in the spindle. It is found in the nucleus. In terms of biological role, facilitates DNA repair, cell cycle progression, and cell proliferation through its interaction with CIAO2B. The chain is Coiled-coil domain-containing protein 117 from Homo sapiens (Human).